Here is a 157-residue protein sequence, read N- to C-terminus: SsrA-binding protein (157 aa).

The disordered stretch occupies residues 133–157 (LHDKRETAKERDWQRDKARLMRDKG). The segment covering 135–157 (DKRETAKERDWQRDKARLMRDKG) has biased composition (basic and acidic residues).

Belongs to the SmpB family.

The protein localises to the cytoplasm. Functionally, required for rescue of stalled ribosomes mediated by trans-translation. Binds to transfer-messenger RNA (tmRNA), required for stable association of tmRNA with ribosomes. tmRNA and SmpB together mimic tRNA shape, replacing the anticodon stem-loop with SmpB. tmRNA is encoded by the ssrA gene; the 2 termini fold to resemble tRNA(Ala) and it encodes a 'tag peptide', a short internal open reading frame. During trans-translation Ala-aminoacylated tmRNA acts like a tRNA, entering the A-site of stalled ribosomes, displacing the stalled mRNA. The ribosome then switches to translate the ORF on the tmRNA; the nascent peptide is terminated with the 'tag peptide' encoded by the tmRNA and targeted for degradation. The ribosome is freed to recommence translation, which seems to be the essential function of trans-translation. This Methylobacterium sp. (strain 4-46) protein is SsrA-binding protein.